We begin with the raw amino-acid sequence, 277 residues long: MALKQFNPTTPGQRQLVIVERSGLYKGKPVKMLTEGLSSKGGRNNRGRVTARFQGGGHKRSYRFVDFKRLKRDVLAKVERLEYDPNRTAFIALIRYEDGQLSYILAPQRLGVGDSVVAGSNVDVKPGNAMPLGNMPVGTIIHNVEMKPGKGGQIARSAGAYAQLVGRDHGMAILRLNSGEQRLVSSSCFATVGAVSNPDHGNINDGKAGRSRWRGKRPHVRGVAMNPVDHPHGGGEGRTSGGRHPVSPWGKPTKGKRTRSNKATDKFIMRTRHQRKK.

Residues 222-277 (GVAMNPVDHPHGGGEGRTSGGRHPVSPWGKPTKGKRTRSNKATDKFIMRTRHQRKK) are disordered.

The protein belongs to the universal ribosomal protein uL2 family. Part of the 50S ribosomal subunit. Forms a bridge to the 30S subunit in the 70S ribosome.

Its function is as follows. One of the primary rRNA binding proteins. Required for association of the 30S and 50S subunits to form the 70S ribosome, for tRNA binding and peptide bond formation. It has been suggested to have peptidyltransferase activity; this is somewhat controversial. Makes several contacts with the 16S rRNA in the 70S ribosome. This Bartonella tribocorum (strain CIP 105476 / IBS 506) protein is Large ribosomal subunit protein uL2.